Reading from the N-terminus, the 88-residue chain is Acylphosphatase (88 aa).

Residues 3-88 (RLVALVKGRV…EAGLKGFHVY (86 aa)) form the Acylphosphatase-like domain. Active-site residues include arginine 18 and asparagine 36.

The protein belongs to the acylphosphatase family.

It carries out the reaction an acyl phosphate + H2O = a carboxylate + phosphate + H(+). The polypeptide is Acylphosphatase (acyP) (Thermus thermophilus (strain ATCC BAA-163 / DSM 7039 / HB27)).